Here is a 255-residue protein sequence, read N- to C-terminus: Imidazole glycerol phosphate synthase subunit HisF (255 aa).

Catalysis depends on residues D12 and D131.

The protein belongs to the HisA/HisF family. In terms of assembly, heterodimer of HisH and HisF.

The protein localises to the cytoplasm. It carries out the reaction 5-[(5-phospho-1-deoxy-D-ribulos-1-ylimino)methylamino]-1-(5-phospho-beta-D-ribosyl)imidazole-4-carboxamide + L-glutamine = D-erythro-1-(imidazol-4-yl)glycerol 3-phosphate + 5-amino-1-(5-phospho-beta-D-ribosyl)imidazole-4-carboxamide + L-glutamate + H(+). The protein operates within amino-acid biosynthesis; L-histidine biosynthesis; L-histidine from 5-phospho-alpha-D-ribose 1-diphosphate: step 5/9. IGPS catalyzes the conversion of PRFAR and glutamine to IGP, AICAR and glutamate. The HisF subunit catalyzes the cyclization activity that produces IGP and AICAR from PRFAR using the ammonia provided by the HisH subunit. The protein is Imidazole glycerol phosphate synthase subunit HisF of Salinispora arenicola (strain CNS-205).